Consider the following 240-residue polypeptide: Transcription factor bHLH47 (240 aa).

Residues 1-13 show a composition bias toward polar residues; sequence MVSKTPSTSSDEA. A disordered region spans residues 1-26; it reads MVSKTPSTSSDEANATADERCRKGKV. Residues 27–77 form the bHLH domain; that stretch reads PKRINKAVRERLKREHLNELFIELADTLELNQQNSGKASILCEATRFLKDV. Residues 98 to 131 are a coiled coil; the sequence is VTTEKNELKEETSVLETEISKLQNEIEARANQSK. A compositionally biased stretch (polar residues) spans 128 to 138; the sequence is NQSKPDLNTSP. The tract at residues 128–153 is disordered; that stretch reads NQSKPDLNTSPAPEYHHHHYQQQHPE.

In terms of assembly, homodimer. Forms heterodimer with PYEL proteins bHLH115, bHLH104 and ILR3. In terms of tissue distribution, expressed constitutively in roots, leaves, stems, and flowers.

Its subcellular location is the nucleus. This is Transcription factor bHLH47 (BHLH47) from Arabidopsis thaliana (Mouse-ear cress).